A 405-amino-acid chain; its full sequence is Putative colanic acid biosynthesis glycosyl transferase WcaC (405 aa).

Its pathway is slime biogenesis; slime polysaccharide biosynthesis. This Escherichia coli (strain K12) protein is Putative colanic acid biosynthesis glycosyl transferase WcaC (wcaC).